The sequence spans 602 residues: Potassium-transporting ATPase potassium-binding subunit (602 aa).

Helical transmembrane passes span 3–23, 64–84, 135–155, 178–198, 282–302, 313–333, 418–438, 456–476, 522–542, and 565–585; these read ANNL…AVPV, QYAL…YALL, GLTV…LALI, LYVL…QGVI, FSNF…CLVF, VAVL…ETSA, GLYG…LMIG, VSIV…IAVL, WMTA…VLAI, and LFVV…YMPA.

It belongs to the KdpA family. The system is composed of three essential subunits: KdpA, KdpB and KdpC.

It is found in the cell inner membrane. Its function is as follows. Part of the high-affinity ATP-driven potassium transport (or Kdp) system, which catalyzes the hydrolysis of ATP coupled with the electrogenic transport of potassium into the cytoplasm. This subunit binds the periplasmic potassium ions and delivers the ions to the membrane domain of KdpB through an intramembrane tunnel. This Burkholderia pseudomallei (strain K96243) protein is Potassium-transporting ATPase potassium-binding subunit.